A 232-amino-acid chain; its full sequence is GDT1-like protein 5 (232 aa).

6 consecutive transmembrane segments (helical) span residues 13–33, 40–60, 72–92, 135–155, 175–195, and 207–227; these read LAMTVLSEIGDKTFFAAAILA, LVLAGCLTSLTVMTALSVSLG, THHVTTLLFFVFGILSLWEGF, PFVLQFFSPIFIKAFSITFFG, FGVVLGGVLAQALCTTAAVMG, and MVGLSSGVLFLLFGIMSYLSG.

Belongs to the GDT1 family.

Its subcellular location is the membrane. This is GDT1-like protein 5 from Oryza sativa subsp. japonica (Rice).